A 67-amino-acid polypeptide reads, in one-letter code: UPF0337 protein CC_0938 (67 aa).

Residues 37 to 67 (AAQKAKGDLQNKVGKAQDKARRRDQALNARL) form a disordered region. The span at 41-61 (AKGDLQNKVGKAQDKARRRDQ) shows a compositional bias: basic and acidic residues.

Belongs to the UPF0337 (CsbD) family.

The protein is UPF0337 protein CC_0938 of Caulobacter vibrioides (strain ATCC 19089 / CIP 103742 / CB 15) (Caulobacter crescentus).